We begin with the raw amino-acid sequence, 82 residues long: Small ribosomal subunit protein bS18 (82 aa).

Belongs to the bacterial ribosomal protein bS18 family. As to quaternary structure, part of the 30S ribosomal subunit. Forms a tight heterodimer with protein bS6.

Binds as a heterodimer with protein bS6 to the central domain of the 16S rRNA, where it helps stabilize the platform of the 30S subunit. This is Small ribosomal subunit protein bS18 from Rhizobium rhizogenes (strain K84 / ATCC BAA-868) (Agrobacterium radiobacter).